The primary structure comprises 361 residues: Alanine racemase 2 (361 aa).

Lys30 (proton acceptor; specific for D-alanine) is an active-site residue. Lys30 carries the N6-(pyridoxal phosphate)lysine modification. Arg122 provides a ligand contact to substrate. Tyr256 serves as the catalytic Proton acceptor; specific for L-alanine. Residue Met303 participates in substrate binding.

It belongs to the alanine racemase family. It depends on pyridoxal 5'-phosphate as a cofactor.

It catalyses the reaction L-alanine = D-alanine. It functions in the pathway amino-acid biosynthesis; D-alanine biosynthesis; D-alanine from L-alanine: step 1/1. In terms of biological role, catalyzes the interconversion of L-alanine and D-alanine. May also act on other amino acids. The protein is Alanine racemase 2 (alr2) of Staphylococcus aureus (strain Mu50 / ATCC 700699).